Here is a 187-residue protein sequence, read N- to C-terminus: Large ribosomal subunit protein uL24c (187 aa).

The transit peptide at 1 to 41 directs the protein to the chloroplast; it reads MAALQSSFAGLSTSFFGQRFSPPLSLPPLVKSTEGPCLIQA.

This sequence belongs to the universal ribosomal protein uL24 family. Part of the 50S ribosomal subunit.

The protein resides in the plastid. Its subcellular location is the chloroplast. Its function is as follows. One of two assembly initiator proteins, it binds directly to the 5'-end of the 23S rRNA, where it nucleates assembly of the 50S subunit. This Nicotiana tabacum (Common tobacco) protein is Large ribosomal subunit protein uL24c (RPL24).